Here is a 212-residue protein sequence, read N- to C-terminus: Small ribosomal subunit protein uS5 (212 aa).

Residues 1-42 (MPGRERRDGGRSADKNDNNKGRNDRGRNDRNNRRGRGRDDDR) are disordered. In terms of domain architecture, S5 DRBM spans 45 to 108 (YIERVVTINR…EEARKNFFRV (64 aa)).

The protein belongs to the universal ribosomal protein uS5 family. In terms of assembly, part of the 30S ribosomal subunit. Contacts proteins S4 and S8.

With S4 and S12 plays an important role in translational accuracy. Its function is as follows. Located at the back of the 30S subunit body where it stabilizes the conformation of the head with respect to the body. In Corynebacterium kroppenstedtii (strain DSM 44385 / JCM 11950 / CIP 105744 / CCUG 35717), this protein is Small ribosomal subunit protein uS5.